A 453-amino-acid polypeptide reads, in one-letter code: Probable glycine dehydrogenase (decarboxylating) subunit 1 (453 aa).

Belongs to the GcvP family. N-terminal subunit subfamily. In terms of assembly, the glycine cleavage system is composed of four proteins: P, T, L and H. In this organism, the P 'protein' is a heterodimer of two subunits.

The catalysed reaction is N(6)-[(R)-lipoyl]-L-lysyl-[glycine-cleavage complex H protein] + glycine + H(+) = N(6)-[(R)-S(8)-aminomethyldihydrolipoyl]-L-lysyl-[glycine-cleavage complex H protein] + CO2. Functionally, the glycine cleavage system catalyzes the degradation of glycine. The P protein binds the alpha-amino group of glycine through its pyridoxal phosphate cofactor; CO(2) is released and the remaining methylamine moiety is then transferred to the lipoamide cofactor of the H protein. The chain is Probable glycine dehydrogenase (decarboxylating) subunit 1 from Nitrosomonas europaea (strain ATCC 19718 / CIP 103999 / KCTC 2705 / NBRC 14298).